A 494-amino-acid chain; its full sequence is Glutamate--tRNA ligase (494 aa).

The short motif at 9 to 19 (PSPTGPLHIGS) is the 'HIGH' region element. Residues 249–253 (KLSKR) carry the 'KMSKS' region motif. An ATP-binding site is contributed by lysine 252.

The protein belongs to the class-I aminoacyl-tRNA synthetase family. Glutamate--tRNA ligase type 1 subfamily. In terms of assembly, monomer.

Its subcellular location is the cytoplasm. It carries out the reaction tRNA(Glu) + L-glutamate + ATP = L-glutamyl-tRNA(Glu) + AMP + diphosphate. Its function is as follows. Catalyzes the attachment of glutamate to tRNA(Glu) in a two-step reaction: glutamate is first activated by ATP to form Glu-AMP and then transferred to the acceptor end of tRNA(Glu). In Azobacteroides pseudotrichonymphae genomovar. CFP2, this protein is Glutamate--tRNA ligase.